The chain runs to 9439 residues: Extracellular matrix-binding protein ebh (9439 aa).

30 consecutive FIVAR domains span residues alanine 1815–alanine 1871, alanine 1901–alanine 1957, alanine 1985–alanine 2041, alanine 2071–glutamate 2127, alanine 2155–alanine 2211, alanine 2241–glutamate 2297, alanine 2325–alanine 2381, alanine 2411–asparagine 2467, aspartate 2488–alanine 2551, alanine 2581–isoleucine 2638, alanine 2665–asparagine 2720, alanine 2748–glutamate 2804, alanine 2832–alanine 2888, alanine 2918–alanine 2974, alanine 3002–alanine 3058, alanine 3088–glutamate 3144, alanine 3172–alanine 3228, alanine 3258–glutamate 3314, aspartate 3335–alanine 3398, alanine 3428–glutamate 3484, alanine 3512–asparagine 3567, isoleucine 3595–serine 3650, alanine 3678–asparagine 3733, serine 3802–lysine 3860, alanine 3928–alanine 3983, alanine 4056–lysine 4114, serine 4182–alanine 4240, alanine 4308–lysine 4365, valine 4433–alanine 4491, and serine 4559–threonine 4617. Over residues glutamate 2495–asparagine 2507 the composition is skewed to basic and acidic residues. The segment at glutamate 2495–serine 2514 is disordered. The span at alanine 2925–glutamine 2938 shows a compositional bias: polar residues. Residues alanine 2925–glutamine 2951 are disordered. The interval glycine 4649–glutamate 4674 is disordered. 14 consecutive FIVAR domains span residues alanine 4685–lysine 4743, alanine 4811–alanine 4869, alanine 4937–alanine 4995, alanine 5063–lysine 5115, alanine 5189–leucine 5246, leucine 5314–alanine 5372, alanine 5440–alanine 5498, alanine 5566–alanine 5624, alanine 5692–threonine 5750, aspartate 5818–leucine 5875, alanine 5943–alanine 6000, lysine 6068–threonine 6126, alanine 6194–isoleucine 6252, and glutamate 6320–alanine 6378. Over residues glutamine 5699 to phenylalanine 5712 the composition is skewed to polar residues. The interval glutamine 5699 to lysine 5719 is disordered. The tract at residues asparagine 6413–serine 6434 is disordered. FIVAR domains follow at residues alanine 6446–alanine 6504, alanine 6572–alanine 6630, serine 6698–alanine 6755, threonine 6823–glutamate 6877, alanine 6949–isoleucine 7007, serine 7075–alanine 7133, aspartate 7201–alanine 7259, alanine 7327–leucine 7384, alanine 7452–alanine 7510, alanine 7578–isoleucine 7636, alanine 7704–valine 7762, alanine 7830–alanine 7888, valine 7956–alanine 8010, isoleucine 8078–phenylalanine 8137, alanine 8205–leucine 8264, alanine 8332–leucine 8391, lysine 8459–leucine 8518, and alanine 8587–isoleucine 8643. Residues threonine 9306–alanine 9324 form a helical membrane-spanning segment. 3 stretches are compositionally biased toward basic and acidic residues: residues aspartate 9363–serine 9375, glutamate 9386–histidine 9395, and glutamine 9404–glutamine 9413. The tract at residues aspartate 9363–lysine 9439 is disordered. Over residues lysine 9414–lysine 9439 the composition is skewed to basic residues.

The protein localises to the cell membrane. In Staphylococcus epidermidis (strain ATCC 12228 / FDA PCI 1200), this protein is Extracellular matrix-binding protein ebh (ebh).